The primary structure comprises 213 residues: Cell division protein SepF 2 (213 aa).

The tract at residues 16–89 (EDDGYDGRGF…ASLAAESSRP (74 aa)) is disordered. The span at 27 to 39 (PDDDFEPELDPEP) shows a compositional bias: acidic residues.

Belongs to the SepF family. In terms of assembly, homodimer. Interacts with FtsZ.

Its subcellular location is the cytoplasm. Cell division protein that is part of the divisome complex and is recruited early to the Z-ring. Probably stimulates Z-ring formation, perhaps through the cross-linking of FtsZ protofilaments. Its function overlaps with FtsA. In Streptomyces coelicolor (strain ATCC BAA-471 / A3(2) / M145), this protein is Cell division protein SepF 2.